A 105-amino-acid chain; its full sequence is Nitrogenase-stabilizing/protective protein NifW (105 aa).

Belongs to the NifW family. Homotrimer; associates with NifD.

May protect the nitrogenase Fe-Mo protein from oxidative damage. The chain is Nitrogenase-stabilizing/protective protein NifW from Rhodospirillum centenum (strain ATCC 51521 / SW).